The chain runs to 812 residues: Lon protease (812 aa).

A Lon N-terminal domain is found at 22–215 (YAVLPLRDIV…KALSFMEAEI (194 aa)). Residue 367 to 374 (GPPGVGKT) coordinates ATP. The region spanning 602–783 (EDQVGVVTGL…GEVLKHALVR (182 aa)) is the Lon proteolytic domain. Residues serine 689 and lysine 732 contribute to the active site. The segment at 787–812 (PIEWTEQENPTAVPPVEDEAGASLAH) is disordered.

This sequence belongs to the peptidase S16 family. In terms of assembly, homohexamer. Organized in a ring with a central cavity.

It localises to the cytoplasm. The catalysed reaction is Hydrolysis of proteins in presence of ATP.. Functionally, ATP-dependent serine protease that mediates the selective degradation of mutant and abnormal proteins as well as certain short-lived regulatory proteins. Required for cellular homeostasis and for survival from DNA damage and developmental changes induced by stress. Degrades polypeptides processively to yield small peptide fragments that are 5 to 10 amino acids long. Binds to DNA in a double-stranded, site-specific manner. Required for wild-type virulence during the initial stages of infection in the mouse model, but not essential for the establishment and maintenance of chronic infection in this host. The chain is Lon protease from Brucella abortus (strain 2308).